Consider the following 230-residue polypeptide: Thymidylate kinase (230 aa).

Residue 20 to 27 (GGEGAGKS) coordinates ATP.

The protein belongs to the thymidylate kinase family.

The catalysed reaction is dTMP + ATP = dTDP + ADP. Its function is as follows. Phosphorylation of dTMP to form dTDP in both de novo and salvage pathways of dTTP synthesis. The protein is Thymidylate kinase of Rhodopseudomonas palustris (strain TIE-1).